We begin with the raw amino-acid sequence, 208 residues long: Probable DNA-3-methyladenine glycosylase (208 aa).

Belongs to the DNA glycosylase MPG family.

It localises to the nucleus. It catalyses the reaction Hydrolysis of alkylated DNA, releasing 3-methyladenine, 3-methylguanine, 7-methylguanine and 7-methyladenine.. In terms of biological role, hydrolysis of the deoxyribose N-glycosidic bond to excise 3-methyladenine, and 7-methylguanine from the damaged DNA polymer formed by alkylation lesions. This is Probable DNA-3-methyladenine glycosylase from Encephalitozoon cuniculi (strain GB-M1) (Microsporidian parasite).